We begin with the raw amino-acid sequence, 358 residues long: MLLADWLQQFEPSFRVFSYLTLRAILSTLTALLIAVLIGPRMIRWLQTMQIGQTVRDDGPQSHLAKSGTPTMGGLLILAAIVVSVLLWADLTNRYVWVTLSVVVGYGIIGFIDDYRKVVRKDPKGLIARWKYFWQSVIAIGVALYLYASQQDPAETALLVPFFKDVMPQMGMFFVVMTYFVIVGTSNAVNLTDGLDGLAIVPTVLVAGAFAIFAYTTGNINFSAYLNIPYLPLTSELVIVCTAIVGAGLGFLWFNTYPAMVFMGDVGSLALGGTLGIIAVLVRQEIVLVIMGGVFVVETLSVILQVGSFKLRGQRIFRMAPIHHHYELKGWPEPRVIVRFWIISIILVLVGLATLKLR.

10 helical membrane-spanning segments follow: residues 19 to 39, 71 to 91, 95 to 115, 126 to 146, 166 to 186, 194 to 214, 237 to 257, 261 to 281, 286 to 306, and 336 to 356; these read YLTL…VLIG, TMGG…WADL, YVWV…IDDY, LIAR…ALYL, VMPQ…VGTS, GLDG…AIFA, LVIV…FNTY, VFMG…IAVL, IVLV…ILQV, and VIVR…ATLK.

Belongs to the glycosyltransferase 4 family. MraY subfamily. The cofactor is Mg(2+).

It localises to the cell inner membrane. It catalyses the reaction UDP-N-acetyl-alpha-D-muramoyl-L-alanyl-gamma-D-glutamyl-meso-2,6-diaminopimeloyl-D-alanyl-D-alanine + di-trans,octa-cis-undecaprenyl phosphate = di-trans,octa-cis-undecaprenyl diphospho-N-acetyl-alpha-D-muramoyl-L-alanyl-D-glutamyl-meso-2,6-diaminopimeloyl-D-alanyl-D-alanine + UMP. It participates in cell wall biogenesis; peptidoglycan biosynthesis. Catalyzes the initial step of the lipid cycle reactions in the biosynthesis of the cell wall peptidoglycan: transfers peptidoglycan precursor phospho-MurNAc-pentapeptide from UDP-MurNAc-pentapeptide onto the lipid carrier undecaprenyl phosphate, yielding undecaprenyl-pyrophosphoryl-MurNAc-pentapeptide, known as lipid I. This chain is Phospho-N-acetylmuramoyl-pentapeptide-transferase, found in Pseudoalteromonas atlantica (strain T6c / ATCC BAA-1087).